The chain runs to 245 residues: Biosynthetic peptidoglycan transglycosylase (245 aa).

Residues 20-42 (VYAGSVFAGAWLATQLFYLVQIA) form a helical membrane-spanning segment.

The protein belongs to the glycosyltransferase 51 family.

It is found in the cell inner membrane. The enzyme catalyses [GlcNAc-(1-&gt;4)-Mur2Ac(oyl-L-Ala-gamma-D-Glu-L-Lys-D-Ala-D-Ala)](n)-di-trans,octa-cis-undecaprenyl diphosphate + beta-D-GlcNAc-(1-&gt;4)-Mur2Ac(oyl-L-Ala-gamma-D-Glu-L-Lys-D-Ala-D-Ala)-di-trans,octa-cis-undecaprenyl diphosphate = [GlcNAc-(1-&gt;4)-Mur2Ac(oyl-L-Ala-gamma-D-Glu-L-Lys-D-Ala-D-Ala)](n+1)-di-trans,octa-cis-undecaprenyl diphosphate + di-trans,octa-cis-undecaprenyl diphosphate + H(+). It functions in the pathway cell wall biogenesis; peptidoglycan biosynthesis. Peptidoglycan polymerase that catalyzes glycan chain elongation from lipid-linked precursors. This is Biosynthetic peptidoglycan transglycosylase from Burkholderia ambifaria (strain MC40-6).